An 880-amino-acid polypeptide reads, in one-letter code: Alanine--tRNA ligase (880 aa).

His-568, His-572, Cys-670, and His-674 together coordinate Zn(2+).

The protein belongs to the class-II aminoacyl-tRNA synthetase family. Zn(2+) serves as cofactor.

The protein resides in the cytoplasm. It catalyses the reaction tRNA(Ala) + L-alanine + ATP = L-alanyl-tRNA(Ala) + AMP + diphosphate. Functionally, catalyzes the attachment of alanine to tRNA(Ala) in a two-step reaction: alanine is first activated by ATP to form Ala-AMP and then transferred to the acceptor end of tRNA(Ala). Also edits incorrectly charged Ser-tRNA(Ala) and Gly-tRNA(Ala) via its editing domain. The sequence is that of Alanine--tRNA ligase from Ligilactobacillus salivarius (strain UCC118) (Lactobacillus salivarius).